The chain runs to 279 residues: Urease accessory protein UreD (279 aa).

The protein belongs to the UreD family. As to quaternary structure, ureD, UreF and UreG form a complex that acts as a GTP-hydrolysis-dependent molecular chaperone, activating the urease apoprotein by helping to assemble the nickel containing metallocenter of UreC. The UreE protein probably delivers the nickel.

It is found in the cytoplasm. Required for maturation of urease via the functional incorporation of the urease nickel metallocenter. This is Urease accessory protein UreD from Trichodesmium erythraeum (strain IMS101).